Here is a 469-residue protein sequence, read N- to C-terminus: Probable NADPH:adrenodoxin oxidoreductase, mitochondrial (469 aa).

The transit peptide at 1 to 38 directs the protein to the mitochondrion; sequence MLSRFIKRTYSTQTSSPVVGIIGSGPAAFYTAHRLLRN. FAD contacts are provided by Ala27, Glu48, Leu56, and Val92. NADP(+) contacts are provided by residues 164 to 167, 208 to 209, and Glu220; these read HGNV and RR. Residues Trp375 and 382–384 contribute to the FAD site; that span reads GVI. Residue Gly382 participates in NADP(+) binding.

This sequence belongs to the ferredoxin--NADP reductase type 1 family. FAD serves as cofactor.

It is found in the mitochondrion inner membrane. It carries out the reaction 2 reduced [adrenodoxin] + NADP(+) + H(+) = 2 oxidized [adrenodoxin] + NADPH. Functionally, adrenodoxin reductase transfers electrons from NADPH to adrenodoxin, which is involved in heme A biosynthesis and in iron-sulfur cluster assembly. Involved in the electron transfer to heme A synthase etp1(cd), a heme protein that catalyzes the conversion of heme O to heme A. Required for the de novo synthesis of Fe-S clusters on iron sulfur cluster assembly protein isu1. Involved in electron delivery for Fe-S cluster synthesis. Essential for coenzyme Q biosynthesis. May be involved in the electron transfer required for the hydroxylation reaction performed by coq6. May play a role in cellular and mitochondrial iron homeostasis. This is Probable NADPH:adrenodoxin oxidoreductase, mitochondrial (arh1) from Schizosaccharomyces pombe (strain 972 / ATCC 24843) (Fission yeast).